Consider the following 296-residue polypeptide: Aldo-keto reductase MYCFIDRAFT_156381 (296 aa).

Aspartate 14 contacts NADP(+). The Proton donor role is filled by tyrosine 19. Histidine 83 contacts substrate. Residues cysteine 113–asparagine 114, glutamine 139, serine 168–arginine 178, and arginine 191 each bind NADP(+). Tyrosine 201 is a substrate binding site. Serine 255 to asparagine 263 is a binding site for NADP(+).

The protein belongs to the aldo/keto reductase family. Aldo/keto reductase 2 subfamily.

The protein operates within secondary metabolite biosynthesis. In terms of biological role, aldo-keto reductase; part of the gene cluster that mediates the biosynthesis of an emodin derivative that may be involved in black Sigatoka disease of banana. The pathway begins with the synthesis of atrochrysone thioester by the polyketide synthase PKS8-1. The atrochrysone carboxyl ACP thioesterase MYCFIDRAFT_190111 then breaks the thioester bond and releases the atrochrysone carboxylic acid from PKS8-1. The decarboxylase MYCFIDRAFT_34057 then catalyzes the concerted decarboxylation-elimination required to convert atochrysone carboxylic acid into emodin anthrone, which is further oxidized to emodin by the anthrone oxygenase MYCFIDRAFT_34418. The functions of the other tailoring enzymes as well as the final product of the cluster have still to be identified. The sequence is that of Aldo-keto reductase MYCFIDRAFT_156381 from Pseudocercospora fijiensis (strain CIRAD86) (Black leaf streak disease fungus).